We begin with the raw amino-acid sequence, 573 residues long: Lauric acid 10-hydroxylase (573 aa).

The next 2 membrane-spanning stretches (helical) occupy residues 3 to 23 and 298 to 318; these read YVNI…LMSL and LFPT…LLIF. Position 516 (cysteine 516) interacts with heme.

Belongs to the cytochrome P450 family. Heme is required as a cofactor. As to expression, mostly expressed in flowers and leaves and, at low levels, in roots and stems.

The protein localises to the endoplasmic reticulum membrane. It carries out the reaction an omega-methyl-medium-chain fatty acid + reduced [NADPH--hemoprotein reductase] + O2 = an omega-hydroxy-medium-chain fatty acid + oxidized [NADPH--hemoprotein reductase] + H2O + H(+). It catalyses the reaction decanoate + reduced [NADPH--hemoprotein reductase] + O2 = 10-hydroxydecanoate + oxidized [NADPH--hemoprotein reductase] + H2O + H(+). The enzyme catalyses dodecanoate + reduced [NADPH--hemoprotein reductase] + O2 = 12-hydroxydodecanoate + oxidized [NADPH--hemoprotein reductase] + H2O + H(+). It participates in lipid metabolism; fatty acid metabolism. Cytochrome P450 hydroxylase catalyzing the conversion of decanoate (capric acid) and dodecanoate (lauric acid) to their corresponding omega-hydroxy metabolites, 10-hydroxydecanoate and 12-hydroxydodecanoate, respectively; these hydroxylated components affect plant growth, including reducing root elongation. The protein is Lauric acid 10-hydroxylase of Petunia hybrida (Petunia).